Here is a 313-residue protein sequence, read N- to C-terminus: Beta-ketoacyl-[acyl-carrier-protein] synthase III (313 aa).

Catalysis depends on residues C112 and H238. An ACP-binding region spans residues 239-243 (QANIR). N268 is a catalytic residue.

Belongs to the thiolase-like superfamily. FabH family. In terms of assembly, homodimer.

The protein localises to the cytoplasm. It catalyses the reaction malonyl-[ACP] + acetyl-CoA + H(+) = 3-oxobutanoyl-[ACP] + CO2 + CoA. The protein operates within lipid metabolism; fatty acid biosynthesis. Catalyzes the condensation reaction of fatty acid synthesis by the addition to an acyl acceptor of two carbons from malonyl-ACP. Catalyzes the first condensation reaction which initiates fatty acid synthesis and may therefore play a role in governing the total rate of fatty acid production. Possesses both acetoacetyl-ACP synthase and acetyl transacylase activities. Its substrate specificity determines the biosynthesis of branched-chain and/or straight-chain of fatty acids. The sequence is that of Beta-ketoacyl-[acyl-carrier-protein] synthase III from Staphylococcus epidermidis (strain ATCC 35984 / DSM 28319 / BCRC 17069 / CCUG 31568 / BM 3577 / RP62A).